Here is a 75-residue protein sequence, read N- to C-terminus: MIKIYSTPTCPWCKKTKEYLKSKNIDFVDVNVADDMKEREEMRSLSKQSGVPVINIDGNIIVGFNKAEIDKLIEK.

The Glutaredoxin domain occupies 1-75 (MIKIYSTPTC…KAEIDKLIEK (75 aa)). Cysteines 10 and 13 form a disulfide.

This sequence belongs to the glutaredoxin family.

This is an uncharacterized protein from Clostridium pasteurianum.